Reading from the N-terminus, the 336-residue chain is TGGKSYTCTECGKGFIKKSRLVTHMKIHTGETHFICTECGKGFSQKGILQTHMKTHTGEKPFTCTECGKNFAQITTLLRHLTIHTGEKPFSCTECGKHFAHKGHLVSHMKTHTGEKPFTCTECGKHFAQKGHLVSHMKTHTGEKPFTCTECGKNFAQKTNLLCHLKIHTGEKPFTCTECGDKFAKKNNLLRHLKIHTGEKPFTCTECGKAFTLKGSLVGHMKIHTGEKPFSCTQCGKNFTQKNSLLCHLTMHTGEKPFTCTECGKGFALKGNLVLHTKIHTGEKPFSCTQCGKNFAQKNSLLRHLKIHTREKPFTYSECGKKYSQIVNLASHMKIH.

C2H2-type zinc fingers lie at residues 6–28, 34–56, 62–84, 90–112, 118–140, 146–168, 174–196, 202–224, 230–252, 258–280, and 286–308; these read YTCT…MKIH, FICT…MKTH, FTCT…LTIH, FSCT…MKTH, FTCT…MKTH, FTCT…LKIH, FTCT…MKIH, FSCT…LTMH, FTCT…TKIH, and FSCT…LKIH.

The protein belongs to the krueppel C2H2-type zinc-finger protein family.

The protein resides in the nucleus. Its function is as follows. May be involved in transcriptional regulation. This Xenopus laevis (African clawed frog) protein is Gastrula zinc finger protein XlCGF57.1.